Consider the following 147-residue polypeptide: Leghemoglobin 6 (147 aa).

Residues 2–147 form the Globin domain; it reads SFTDKQEALV…LATEIKKAMS (146 aa). Nitrated tyrosine occurs at positions 25 and 30. Ser45 serves as a coordination point for heme b. Ser45 is subject to Phosphoserine. His62 is a binding site for O2. The heme b site is built by Lys65, His94, and Lys97. Position 135 is a nitrated tyrosine (Tyr135).

The protein belongs to the plant globin family. Monomer. Post-translationally, nitrated in effective nodules and particularly in hypoxic conditions; this mechanism may play a protective role in the symbiosis by buffering toxic peroxynitrite NO(2)(-). Nitration level decrease during nodule senescence. In terms of processing, phosphorylation at Ser-45 disrupts the molecular environment of its porphyrin ring oxygen binding pocket, thus leading to a reduced oxygen consumption and to the delivery of oxygen O(2) to symbiosomes. As to expression, root nodules.

The protein resides in the cytoplasm. It is found in the cytosol. Its subcellular location is the nucleus. Its function is as follows. Leghemoglobin that reversibly binds oxygen O(2) through a pentacoordinated heme iron. In root nodules, facilitates the diffusion of oxygen to the bacteroids while preventing the bacterial nitrogenase from being inactivated by buffering dioxygen, nitric oxide and carbon monoxide, and promoting the formation of reactive oxygen species (ROS, e.g. H(2)O(2)). This role is essential for symbiotic nitrogen fixation (SNF). In Medicago truncatula (Barrel medic), this protein is Leghemoglobin 6.